We begin with the raw amino-acid sequence, 496 residues long: UDP-glycosyltransferase 73C3 (496 aa).

UDP-alpha-D-glucose contacts are provided by residues serine 297, alanine 357–glutamine 359, histidine 374–glutamate 382, and phenylalanine 396–glutamine 399.

It belongs to the UDP-glycosyltransferase family.

The sequence is that of UDP-glycosyltransferase 73C3 (UGT73C3) from Arabidopsis thaliana (Mouse-ear cress).